Consider the following 84-residue polypeptide: RNA-binding protein Hfq (84 aa).

The Sm domain maps to 9–68; sequence DPYLNTLRKERVPVSIYLVNGIKLQGQIESFDQFVILLKNTVSQMVYKHAISTVVPSRPV.

Belongs to the Hfq family. As to quaternary structure, homohexamer.

In terms of biological role, RNA chaperone that binds small regulatory RNA (sRNAs) and mRNAs to facilitate mRNA translational regulation in response to envelope stress, environmental stress and changes in metabolite concentrations. Also binds with high specificity to tRNAs. This Azotobacter vinelandii (strain DJ / ATCC BAA-1303) protein is RNA-binding protein Hfq.